Here is a 133-residue protein sequence, read N- to C-terminus: Ribonuclease P protein component (133 aa).

It belongs to the RnpA family. Consists of a catalytic RNA component (M1 or rnpB) and a protein subunit.

The enzyme catalyses Endonucleolytic cleavage of RNA, removing 5'-extranucleotides from tRNA precursor.. In terms of biological role, RNaseP catalyzes the removal of the 5'-leader sequence from pre-tRNA to produce the mature 5'-terminus. It can also cleave other RNA substrates such as 4.5S RNA. The protein component plays an auxiliary but essential role in vivo by binding to the 5'-leader sequence and broadening the substrate specificity of the ribozyme. The chain is Ribonuclease P protein component from Corynebacterium efficiens (strain DSM 44549 / YS-314 / AJ 12310 / JCM 11189 / NBRC 100395).